A 401-amino-acid chain; its full sequence is 8-amino-7-oxononanoate synthase (401 aa).

Residue Arg24 participates in substrate binding. Position 111–112 (111–112) interacts with pyridoxal 5'-phosphate; that stretch reads GF. His137 serves as a coordination point for substrate. Pyridoxal 5'-phosphate is bound by residues Ser183, His211, and Thr240. The residue at position 243 (Lys243) is an N6-(pyridoxal phosphate)lysine. Thr357 serves as a coordination point for substrate.

Belongs to the class-II pyridoxal-phosphate-dependent aminotransferase family. BioF subfamily. Homodimer. It depends on pyridoxal 5'-phosphate as a cofactor.

It catalyses the reaction 6-carboxyhexanoyl-[ACP] + L-alanine + H(+) = (8S)-8-amino-7-oxononanoate + holo-[ACP] + CO2. It participates in cofactor biosynthesis; biotin biosynthesis. Catalyzes the decarboxylative condensation of pimeloyl-[acyl-carrier protein] and L-alanine to produce 8-amino-7-oxononanoate (AON), [acyl-carrier protein], and carbon dioxide. In Xylella fastidiosa (strain 9a5c), this protein is 8-amino-7-oxononanoate synthase.